The sequence spans 290 residues: Enoyl-CoA hydratase, mitochondrial (290 aa).

The N-terminal 27 residues, 1–27 (MATLRVLLSCVRGPLRPPVRCPAWRPF), are a transit peptide targeting the mitochondrion. The residue at position 46 (T46) is a Phosphothreonine. Residue 98–101 (ADIK) coordinates substrate. At K101 the chain carries N6-acetyllysine; alternate. At K101 the chain carries N6-succinyllysine; alternate. S114 is modified (phosphoserine). K115 carries the post-translational modification N6-acetyllysine; alternate. K115 carries the post-translational modification N6-succinyllysine; alternate. K118 is modified (N6-acetyllysine). G141 serves as a coordination point for substrate. K204 bears the N6-succinyllysine mark. Residue K211 is modified to N6-acetyllysine.

The protein belongs to the enoyl-CoA hydratase/isomerase family. Homohexamer; dimer of trimers.

The protein localises to the mitochondrion matrix. The enzyme catalyses a (3S)-3-hydroxyacyl-CoA = a (2E)-enoyl-CoA + H2O. It catalyses the reaction a (3E)-enoyl-CoA = a 4-saturated (2E)-enoyl-CoA. It carries out the reaction (3E)-hexenoyl-CoA = (2E)-hexenoyl-CoA. The catalysed reaction is (3S)-3-hydroxybutanoyl-CoA = (2E)-butenoyl-CoA + H2O. The enzyme catalyses 3-hydroxyisovaleryl-CoA = 3-methylbut-2-enoyl-CoA + H2O. It catalyses the reaction 3-hydroxypropanoyl-CoA = acryloyl-CoA + H2O. It carries out the reaction 3-hydroxybutanoyl-CoA = (2E)-butenoyl-CoA + H2O. The catalysed reaction is 2-methylpropenoyl-CoA + H2O = (S)-3-hydroxyisobutanoyl-CoA. The enzyme catalyses (3S)-hydroxyhexanoyl-CoA = (2E)-hexenoyl-CoA + H2O. It catalyses the reaction (3S)-hydroxydecanoyl-CoA = (2E)-decenoyl-CoA + H2O. It participates in lipid metabolism; fatty acid beta-oxidation. Converts unsaturated trans-2-enoyl-CoA species ((2E)-enoyl-CoA) to the corresponding (3S)-3-hydroxyacyl-CoA species through addition of a water molecule to the double bond. Catalyzes the hydration of medium- and short-chained fatty enoyl-CoA thioesters from 4 carbons long (C4) up to C16. Has high substrate specificity for crotonyl-CoA ((2E)-butenoyl-CoA) and moderate specificity for acryloyl-CoA, 3-methylcrotonyl-CoA (3-methyl-(2E)-butenoyl-CoA) and methacrylyl-CoA ((2E)-2-methylpropenoyl-CoA). Can bind tiglyl-CoA (2-methylcrotonoyl-CoA), but hydrates only a small amount of this substrate. Plays a key role in the beta-oxidation spiral of short- and medium-chain fatty acid oxidation. At a lower rate than the hydratase reaction, catalyzes the isomerase reaction of trans-3-enoyl-CoA species (such as (3E)-hexenoyl-CoA) to trans-2-enoyl-CoA species (such as (2E)-hexenoyl-CoA), which are subsequently hydrated to 3(S)-3-hydroxyacyl-CoA species (such as (3S)-hydroxyhexanoyl-CoA). The chain is Enoyl-CoA hydratase, mitochondrial (ECHS1) from Pongo abelii (Sumatran orangutan).